The chain runs to 1668 residues: Zinc finger CCCH domain-containing protein 13 (1668 aa).

2 disordered regions span residues 1 to 38 (MSKI…GSTA) and 56 to 157 (TCRF…GDIN). Over residues 10–23 (VENTKTISDSTSRR) the composition is skewed to polar residues. A C3H1-type zinc finger spans residues 36-64 (STAETQCRNWLKTGNCLYGNTCRFVHGPS). Residues S64 and S77 each carry the phosphoserine modification. Positions 76 to 136 (RSPERPTGDL…IKITKERTPE (61 aa)) are enriched in basic and acidic residues. Glycyl lysine isopeptide (Lys-Gly) (interchain with G-Cter in SUMO2) cross-links involve residues K179 and K194. Disordered regions lie at residues 190–1112 (EIII…TATA) and 1125–1466 (AAAT…PISD). Phosphoserine is present on residues S198, S207, S209, and S211. Residues 204 to 213 (SKLSPSPSLR) show a composition bias toward low complexity. A compositionally biased stretch (basic residues) spans 214 to 224 (KSSKSPKRKSS). A Phosphothreonine modification is found at T237. A phosphoserine mark is found at S238 and S242. A compositionally biased stretch (polar residues) spans 239–254 (AVSSPLLDQQRNSKTN). At T263 the chain carries Phosphothreonine. The residue at position 265 (S265) is a Phosphoserine. Positions 283-315 (KYKVKDRIEEKTRDGKDRGRDFERQREKRDKPR) are enriched in basic and acidic residues. 4 positions are modified to phosphoserine: S316, S318, S325, and S328. The span at 323-346 (HHSPISSRHHSSSSQSGSSIQRHS) shows a compositional bias: low complexity. 2 positions are modified to phosphothreonine: T354 and T364. S370, S372, and S381 each carry phosphoserine. Residues 370–382 (SASPYPSHSLSSP) show a composition bias toward low complexity. Composition is skewed to basic and acidic residues over residues 394–434 (PMRE…REER) and 442–575 (SSRD…EKGS). The segment covering 584–593 (DSHSSNSNYH) has biased composition (low complexity). Residues 594–640 (DSWETRSSYPERDRYPERDNRDQARDSSFERRHGERDRRDNRERDQR) are compositionally biased toward basic and acidic residues. S643 carries the post-translational modification Phosphoserine. Residues 645-789 (IRHQGRNDEL…RDKERERQRD (145 aa)) are a coiled coil. A compositionally biased stretch (basic and acidic residues) spans 649 to 821 (GRNDELERDE…NPRDGHDERK (173 aa)). Phosphoserine occurs at positions 831, 833, 837, 845, 848, 853, 873, 875, and 877. A compositionally biased stretch (basic and acidic residues) spans 881–957 (LTEDRQGRWK…TSDRAHDENK (77 aa)). At T882 the chain carries Phosphothreonine. Phosphoserine is present on S943. Positions 958–969 (KKAKIQKKPIKK) are enriched in basic residues. A compositionally biased stretch (basic and acidic residues) spans 970–981 (KKEDDVGIERGN). Phosphoserine occurs at positions 986, 993, 1010, 1014, and 1017. The span at 996–1010 (KGQKKKSIEKKRKKS) shows a compositional bias: basic residues. Position 1033 is a phosphothreonine (T1033). Basic and acidic residues predominate over residues 1073-1083 (PDRTEVTEAEH). 2 stretches are compositionally biased toward low complexity: residues 1084 to 1100 (TATA…LSSL) and 1125 to 1153 (AAAT…TFAN). The segment covering 1163-1188 (TRVEKVETPHVTIEDAQHRKPMDQKR) has biased composition (basic and acidic residues). T1170 is subject to Phosphothreonine. 4 positions are modified to phosphoserine: S1191, S1194, S1208, and S1210. Over residues 1213–1223 (SAHRSGDDQSG) the composition is skewed to basic and acidic residues. Residue S1230 is modified to Phosphoserine. Basic and acidic residues-rich tracts occupy residues 1231–1286 (GSRD…DRQV) and 1294–1379 (DSRD…DRTF). Residues 1300-1366 (QERDRYEHDR…RERERLISDS (67 aa)) are a coiled coil. S1364, S1366, S1382, S1386, S1406, S1409, S1438, L1453, G1456, S1465, and D1466 each carry phosphoserine. Composition is skewed to basic and acidic residues over residues 1386–1421 (SVKR…DKDL) and 1429–1438 (ETNKSERTES).

The protein belongs to the ZC3H13 family. Component of the WMM complex, a N6-methyltransferase complex composed of a catalytic subcomplex, named MAC, and of an associated subcomplex, named MACOM. The MAC subcomplex is composed of METTL3 and METTL14. The MACOM subcomplex is composed of WTAP, ZC3H13, CBLL1/HAKAI, VIRMA, and, in some cases of RBM15 (RBM15 or RBM15B). Also a component of a MACOM-like complex, named WTAP complex, composed of WTAP, ZC3H13, CBLL1/HAKAI, VIRMA, RBM15, BCLAF1 and THRAP3.

It is found in the nucleus speckle. The protein resides in the nucleus. It localises to the nucleoplasm. Its function is as follows. Associated component of the WMM complex, a complex that mediates N6-methyladenosine (m6A) methylation of RNAs, a modification that plays a role in the efficiency of mRNA splicing and RNA processing. Acts as a key regulator of m6A methylation by promoting m6A methylation of mRNAs at the 3'-UTR. Controls embryonic stem cells (ESCs) pluripotency via its role in m6A methylation. In the WMM complex, anchors component of the MACOM subcomplex in the nucleus. Also required for bridging WTAP to the RNA-binding component RBM15 (RBM15 or RBM15B). The polypeptide is Zinc finger CCCH domain-containing protein 13 (Homo sapiens (Human)).